A 504-amino-acid chain; its full sequence is MVNIRPDEISSIIRQQIEKYDQDVEVANIGTVLQVGDGIARVYGLDEVMAGELLEFEDKTIGVALNLESDNVGVVLMGDGRDILEGSSVKGTGKIAQIPVGDAFLGRVVDPLARPIDNKGEPASNGTRLIESMAPGIIGRQSVCEPMQTGITAIDSMIPIGRGQRELIIGDRQTGKTAVALDTIINQKGQDVVCVYVAIGQKASSVAQVVSSLQEKGALDYTIIVTANADSPATLQYIAPYTGAALAEYFMYKGKATLVIYDDLTKQAQAYRQMSLLLRRPPGREAYPGDVFYLHSRLLERAAKLNSDLGGGSMTALPIIETQAGDVSAYIPTNVISITDGQIFLSGDLFNSGIRPAINVGISVSRVGSAAQIKAMKQVAGKLKLELAQFAELEAFSQFASDLDKATQNQLARGQRLREILKQAQNSPIPVEEQTAIIYTGINGYLDDIAVNKVPDFIIKLREDLKNSKPEFGESIRSSKKLDTASEELLKKAIEDVKQGFVKA.

An ATP-binding site is contributed by 170–177 (GDRQTGKT).

It belongs to the ATPase alpha/beta chains family. As to quaternary structure, F-type ATPases have 2 components, CF(1) - the catalytic core - and CF(0) - the membrane proton channel. CF(1) has five subunits: alpha(3), beta(3), gamma(1), delta(1), epsilon(1). CF(0) has four main subunits: a, b, b' and c.

The protein localises to the plastid. The protein resides in the chloroplast thylakoid membrane. It carries out the reaction ATP + H2O + 4 H(+)(in) = ADP + phosphate + 5 H(+)(out). In terms of biological role, produces ATP from ADP in the presence of a proton gradient across the membrane. The alpha chain is a regulatory subunit. The sequence is that of ATP synthase subunit alpha, chloroplastic from Porphyra purpurea (Red seaweed).